The chain runs to 344 residues: Small ribosomal subunit protein mS38 (344 aa).

Disordered regions lie at residues 1-27 (MIPQSVRRVVAAAPQSPVVSSLAASSA), 43-101 (ALQK…SVPS), and 325-344 (KKYKKLMRRTRNERRKQDRL). The span at 51–74 (SSKPSSPDDGSSRAFAARASVPAA) shows a compositional bias: low complexity. Positions 325-338 (KKYKKLMRRTRNER) are enriched in basic residues.

It belongs to the mitochondrion-specific ribosomal protein mS38 family. Component of the mitochondrial small ribosomal subunit (mt-SSU). Mature N.crassa 74S mitochondrial ribosomes consist of a small (37S) and a large (54S) subunit. The 37S small subunit contains a 16S ribosomal RNA (16S mt-rRNA) and 32 different proteins. The 54S large subunit contains a 23S rRNA (23S mt-rRNA) and 42 different proteins.

The protein resides in the mitochondrion. In terms of biological role, component of the mitochondrial ribosome (mitoribosome), a dedicated translation machinery responsible for the synthesis of mitochondrial genome-encoded proteins, including at least some of the essential transmembrane subunits of the mitochondrial respiratory chain. The mitoribosomes are attached to the mitochondrial inner membrane and translation products are cotranslationally integrated into the membrane. This chain is Small ribosomal subunit protein mS38 (cox24), found in Neurospora crassa (strain ATCC 24698 / 74-OR23-1A / CBS 708.71 / DSM 1257 / FGSC 987).